The primary structure comprises 138 residues: Transcription antitermination protein NusB (138 aa).

The protein belongs to the NusB family.

Functionally, involved in transcription antitermination. Required for transcription of ribosomal RNA (rRNA) genes. Binds specifically to the boxA antiterminator sequence of the ribosomal RNA (rrn) operons. This is Transcription antitermination protein NusB from Limosilactobacillus reuteri (strain DSM 20016) (Lactobacillus reuteri).